The sequence spans 455 residues: Epoxide hydrolase 1 (455 aa).

Residues 1-21 (MWLELILASVLGFVIYWFVSR) form a helical; Signal-anchor for type III membrane protein membrane-spanning segment. Over 22–455 (DKEETLPLED…RKFVSLAELQ (434 aa)) the chain is Cytoplasmic. Asp226 serves as the catalytic Nucleophile. Dimethylated arginine is present on Arg295. Tyr374 serves as the catalytic Proton donor. The Proton acceptor role is filled by His431. Lys439 is modified (N6-acetyllysine).

Belongs to the peptidase S33 family.

It is found in the microsome membrane. The protein resides in the endoplasmic reticulum membrane. It carries out the reaction cis-stilbene oxide + H2O = (1R,2R)-hydrobenzoin. It catalyses the reaction 1-(4-methoxyphenyl)-N-methyl-N-[(3-methyloxetan-3-yl)methyl]methanamine + H2O = 2-{[(4-methoxybenzyl)(methyl)amino]methyl}-2-methylpropane-1,3-diol. The catalysed reaction is 8,9-epoxy-(5Z,11Z,14Z)-eicosatrienoate + H2O = 8,9-dihydroxy-(5Z,11Z,14Z)-eicosatrienoate. The enzyme catalyses 11,12-epoxy-(5Z,8Z,14Z)-eicosatrienoate + H2O = 11,12-dihydroxy-(5Z,8Z,14Z)-eicosatrienoate. It carries out the reaction 2-(5Z,8Z,11Z,14Z-eicosatetraenoyl)-glycerol + H2O = glycerol + (5Z,8Z,11Z,14Z)-eicosatetraenoate + H(+). Its activity is regulated as follows. Inhibited by 10-hydroxystearamide and methoxy-arachidonyl fluorophosphate. In terms of biological role, biotransformation enzyme that catalyzes the hydrolysis of arene and aliphatic epoxides to less reactive and more water soluble dihydrodiols by the trans addition of water. May play a role in the metabolism of endogenous lipids such as epoxide-containing fatty acids. Metabolizes the abundant endocannabinoid 2-arachidonoylglycerol (2-AG) to free arachidonic acid (AA) and glycerol. Binds 20(S)-hydroxycholesterol (20(S)-OHC). This chain is Epoxide hydrolase 1, found in Mus musculus (Mouse).